The following is a 258-amino-acid chain: Triosephosphate isomerase (258 aa).

Residue N11–K13 participates in substrate binding. Residue H101 is the Electrophile of the active site. The active-site Proton acceptor is the E173. Substrate contacts are provided by residues G179, S219, and G240–G241.

It belongs to the triosephosphate isomerase family. Homodimer.

It is found in the cytoplasm. It carries out the reaction D-glyceraldehyde 3-phosphate = dihydroxyacetone phosphate. It functions in the pathway carbohydrate biosynthesis; gluconeogenesis. The protein operates within carbohydrate degradation; glycolysis; D-glyceraldehyde 3-phosphate from glycerone phosphate: step 1/1. Its function is as follows. Involved in the gluconeogenesis. Catalyzes stereospecifically the conversion of dihydroxyacetone phosphate (DHAP) to D-glyceraldehyde-3-phosphate (G3P). In Streptomyces coelicolor (strain ATCC BAA-471 / A3(2) / M145), this protein is Triosephosphate isomerase.